Consider the following 198-residue polypeptide: MTDIFIYPQANLIAGVDEVGRGPLVGAVVTAAVILDPKRPIVGLADSKKLSEKRRLSLYDEITDKALSWSLGRAEPEEIDQLNILHATMLAMQRAVAGLHIAPDYVLIDGNRCPKLAMPSLAVVKGDSRVAEISAASILAKVTRDREMTELDLQFPEYGFAQHKGYPTAVHLEKLTTFGATEHHRRSFGPVKRVLGLV.

One can recognise an RNase H type-2 domain in the interval 11-198; the sequence is NLIAGVDEVG…GPVKRVLGLV (188 aa). Residues aspartate 17, glutamate 18, and aspartate 109 each contribute to the a divalent metal cation site.

It belongs to the RNase HII family. Mn(2+) is required as a cofactor. The cofactor is Mg(2+).

It is found in the cytoplasm. The catalysed reaction is Endonucleolytic cleavage to 5'-phosphomonoester.. In terms of biological role, endonuclease that specifically degrades the RNA of RNA-DNA hybrids. This Yersinia enterocolitica serotype O:8 / biotype 1B (strain NCTC 13174 / 8081) protein is Ribonuclease HII.